Reading from the N-terminus, the 305-residue chain is GMP synthase [glutamine-hydrolyzing] subunit B (305 aa).

In terms of domain architecture, GMPS ATP-PPase spans 2 to 184 (VNIEKFIDQA…LGLPAEIQHR (183 aa)). Position 29–35 (29–35 (SGGVDSS)) interacts with ATP.

In terms of assembly, heterodimer composed of a glutamine amidotransferase subunit (A) and a GMP-binding subunit (B).

The catalysed reaction is XMP + L-glutamine + ATP + H2O = GMP + L-glutamate + AMP + diphosphate + 2 H(+). It functions in the pathway purine metabolism; GMP biosynthesis; GMP from XMP (L-Gln route): step 1/1. Catalyzes the synthesis of GMP from XMP. The chain is GMP synthase [glutamine-hydrolyzing] subunit B from Methanoculleus marisnigri (strain ATCC 35101 / DSM 1498 / JR1).